We begin with the raw amino-acid sequence, 270 residues long: NAD kinase (270 aa).

The active-site Proton acceptor is aspartate 49. NAD(+)-binding positions include aspartate 49 to glycine 50, arginine 54, asparagine 126 to glutamate 127, arginine 152, aspartate 154, threonine 165 to serine 170, alanine 189, and glutamine 227.

It belongs to the NAD kinase family. The cofactor is a divalent metal cation.

The protein resides in the cytoplasm. The catalysed reaction is NAD(+) + ATP = ADP + NADP(+) + H(+). Functionally, involved in the regulation of the intracellular balance of NAD and NADP, and is a key enzyme in the biosynthesis of NADP. Catalyzes specifically the phosphorylation on 2'-hydroxyl of the adenosine moiety of NAD to yield NADP. In Lactococcus lactis subsp. cremoris (strain SK11), this protein is NAD kinase.